The primary structure comprises 45 residues: Large ribosomal subunit protein bL34 (45 aa).

This sequence belongs to the bacterial ribosomal protein bL34 family.

The sequence is that of Large ribosomal subunit protein bL34 from Prochlorococcus marinus (strain MIT 9313).